We begin with the raw amino-acid sequence, 271 residues long: Formamidopyrimidine-DNA glycosylase (271 aa).

P2 acts as the Schiff-base intermediate with DNA in catalysis. E3 functions as the Proton donor in the catalytic mechanism. Residue K57 is the Proton donor; for beta-elimination activity of the active site. DNA is bound by residues H90, R109, and K151. The FPG-type zinc finger occupies 236–270 (HVYGRGGETCTQCGNLLSEIRLGQRTTVFCGICQT). R260 acts as the Proton donor; for delta-elimination activity in catalysis.

Belongs to the FPG family. In terms of assembly, monomer. The cofactor is Zn(2+).

It catalyses the reaction Hydrolysis of DNA containing ring-opened 7-methylguanine residues, releasing 2,6-diamino-4-hydroxy-5-(N-methyl)formamidopyrimidine.. The catalysed reaction is 2'-deoxyribonucleotide-(2'-deoxyribose 5'-phosphate)-2'-deoxyribonucleotide-DNA = a 3'-end 2'-deoxyribonucleotide-(2,3-dehydro-2,3-deoxyribose 5'-phosphate)-DNA + a 5'-end 5'-phospho-2'-deoxyribonucleoside-DNA + H(+). Functionally, involved in base excision repair of DNA damaged by oxidation or by mutagenic agents. Acts as a DNA glycosylase that recognizes and removes damaged bases. Has a preference for oxidized purines, such as 7,8-dihydro-8-oxoguanine (8-oxoG). Has AP (apurinic/apyrimidinic) lyase activity and introduces nicks in the DNA strand. Cleaves the DNA backbone by beta-delta elimination to generate a single-strand break at the site of the removed base with both 3'- and 5'-phosphates. This chain is Formamidopyrimidine-DNA glycosylase, found in Shewanella sp. (strain MR-7).